We begin with the raw amino-acid sequence, 185 residues long: Elongation factor P (185 aa).

It belongs to the elongation factor P family.

Its subcellular location is the cytoplasm. The protein operates within protein biosynthesis; polypeptide chain elongation. Its function is as follows. Involved in peptide bond synthesis. Stimulates efficient translation and peptide-bond synthesis on native or reconstituted 70S ribosomes in vitro. Probably functions indirectly by altering the affinity of the ribosome for aminoacyl-tRNA, thus increasing their reactivity as acceptors for peptidyl transferase. The sequence is that of Elongation factor P from Bordetella bronchiseptica (strain ATCC BAA-588 / NCTC 13252 / RB50) (Alcaligenes bronchisepticus).